Here is a 489-residue protein sequence, read N- to C-terminus: Aspartate/glutamate permease AcaP (489 aa).

12 consecutive transmembrane segments (helical) span residues 6-26 (IRWF…GNVV), 36-56 (VVTS…LIVG), 91-111 (VVHI…FGWV), 122-142 (MSMT…LWLS), 152-172 (IGGL…VMAI), 195-215 (IPKF…AVGG), 238-258 (FLLA…MGMI), 290-310 (LMIV…AFSI), 342-362 (GYTL…LGIG), 373-393 (NLNS…FIML), 413-433 (AMIA…LGMV), and 449-469 (LASN…LPFI).

The protein belongs to the amino acid-polyamine-organocation (APC) superfamily. Glutamate:GABA antiporter (GGA) (TC 2.A.3.7) family.

The protein localises to the cell membrane. Functionally, involved in aspartate and glutamate uptake. Plays no significant role in the excretion of accumulated glutamate. In Lactococcus lactis subsp. cremoris (strain MG1363), this protein is Aspartate/glutamate permease AcaP.